A 714-amino-acid polypeptide reads, in one-letter code: MAELLIELFMEEIPARMQVRAGEDFRRLVTDRLAAAGIQFQRAEVHTTPRRIALVVEGIPARQADVREERKGPRVGSPEQALQGFLRAAGLTDISQAEQRDTGKGVFYFAVIEKPGGATIDALPALIDGAIRDLPWPKSMRWGTNQFRWVRPLHGILALFDGQVVPGGLTIGTAEPPPETSEGNACLAGEATARVIRYGNETKGHRFLSPDTLTVTSFEDYKAKLRGAHVILDREERKQLILAGARAAAEAEGLVLKDDPGLLEEVAGLVEWPVVLVGGIDEQFMDVPAEVLTTSMRTHQRYFALETTQGKLAPRFVVVANRPTVDGGAAVVAGNERVLRARLSDAKFFWDQDLATPLETRRQALADIKFHEKLGTMLERAERIEALAVEIARTLGLDTGALERVRIAARLCKADLVTGVVGEFPEVQGILGGHVARAQDLPADVADAIADHYRPLGPSDRVPADPVAVAVALADKIDTLVAFFAIDEKPTGSRDPFALRRAALGVIRLIVENGLRASLLPLFGRAAVAVPAAAGETVGGDLLSFFADRLKVALKEKGVRHDLIDAVFGLGGQDDLVLLLKRVDALAGFVASEDGANLLVAYRRAANILRIEEKKDGVSYSGGGIDAGRLEQAEERALAAALDATAADLAPLLAAEDFTGAMRLLSALRGPVDAFFDKVTVNAPDAVLRANRLRLLARIRDTLNGVADFSRIEG.

The protein belongs to the class-II aminoacyl-tRNA synthetase family. As to quaternary structure, tetramer of two alpha and two beta subunits.

It localises to the cytoplasm. It catalyses the reaction tRNA(Gly) + glycine + ATP = glycyl-tRNA(Gly) + AMP + diphosphate. This chain is Glycine--tRNA ligase beta subunit, found in Rhodospirillum centenum (strain ATCC 51521 / SW).